The chain runs to 273 residues: Dermonecrotic toxin LafSicTox-betaIE1 (273 aa).

Residue His-5 is part of the active site. Residues Glu-25 and Asp-27 each coordinate Mg(2+). The Nucleophile role is filled by His-41. Intrachain disulfides connect Cys-45/Cys-51 and Cys-47/Cys-189. Position 85 (Asp-85) interacts with Mg(2+). N-linked (GlcNAc...) asparagine glycosylation is present at Asn-250.

It belongs to the arthropod phospholipase D family. Class II subfamily. Mg(2+) is required as a cofactor. As to expression, expressed by the venom gland.

Its subcellular location is the secreted. The enzyme catalyses an N-(acyl)-sphingosylphosphocholine = an N-(acyl)-sphingosyl-1,3-cyclic phosphate + choline. It carries out the reaction an N-(acyl)-sphingosylphosphoethanolamine = an N-(acyl)-sphingosyl-1,3-cyclic phosphate + ethanolamine. The catalysed reaction is a 1-acyl-sn-glycero-3-phosphocholine = a 1-acyl-sn-glycero-2,3-cyclic phosphate + choline. It catalyses the reaction a 1-acyl-sn-glycero-3-phosphoethanolamine = a 1-acyl-sn-glycero-2,3-cyclic phosphate + ethanolamine. Its function is as follows. Dermonecrotic toxins cleave the phosphodiester linkage between the phosphate and headgroup of certain phospholipids (sphingolipid and lysolipid substrates), forming an alcohol (often choline) and a cyclic phosphate. This toxin acts on sphingomyelin (SM). It may also act on ceramide phosphoethanolamine (CPE), lysophosphatidylcholine (LPC) and lysophosphatidylethanolamine (LPE), but not on lysophosphatidylserine (LPS), and lysophosphatidylglycerol (LPG). It acts by transphosphatidylation, releasing exclusively cyclic phosphate products as second products. Induces dermonecrosis, hemolysis, increased vascular permeability, edema, inflammatory response, and platelet aggregation. In Loxosceles aff. spinulosa (strain GJB-2008) (Recluse spider), this protein is Dermonecrotic toxin LafSicTox-betaIE1.